Consider the following 293-residue polypeptide: Ribosomal protein L11 methyltransferase (293 aa).

Threonine 145, glycine 166, aspartate 188, and asparagine 230 together coordinate S-adenosyl-L-methionine.

It belongs to the methyltransferase superfamily. PrmA family.

It is found in the cytoplasm. The enzyme catalyses L-lysyl-[protein] + 3 S-adenosyl-L-methionine = N(6),N(6),N(6)-trimethyl-L-lysyl-[protein] + 3 S-adenosyl-L-homocysteine + 3 H(+). Its function is as follows. Methylates ribosomal protein L11. This Salmonella arizonae (strain ATCC BAA-731 / CDC346-86 / RSK2980) protein is Ribosomal protein L11 methyltransferase.